Reading from the N-terminus, the 119-residue chain is MFSLKRQQGASFEQQARLFLESQGLQFIAANQNFKCGELDLVMLDGETIVFVEVRQRKNDHFGSAVESVDWQKQQKWINAASLWLATQNHSLEDTDCRFDLVAFGATASNVQWLKNFIE.

This sequence belongs to the UPF0102 family.

The protein is UPF0102 protein MS1289 of Mannheimia succiniciproducens (strain KCTC 0769BP / MBEL55E).